An 857-amino-acid polypeptide reads, in one-letter code: Mitogen-activated protein kinase kinase kinase dlk-1 (857 aa).

The 243-residue stretch at 62–304 (ISNLEWLGSG…FSHIRQHWEI (243 aa)) folds into the Protein kinase domain. Residues 68 to 76 (LGSGSQGAV) and Lys-89 contribute to the ATP site. Residue Asp-173 is the Proton acceptor of the active site. Disordered stretches follow at residues 441–503 (EEMS…ISRN), 572–625 (RIAS…PSRN), 733–775 (NAND…MESE), and 818–857 (HSIK…AVRI). Residues 467–488 (SSGAQSSPFSRQSSCRSSAGQQ) are compositionally biased toward low complexity. Over residues 609–623 (APRSSSKLNRSSYPS) the composition is skewed to polar residues. A compositionally biased stretch (acidic residues) spans 753-762 (ADVESSEDEG). Residues 763-772 (NGNNILNTSM) are compositionally biased toward polar residues.

Belongs to the protein kinase superfamily. STE Ser/Thr protein kinase family. MAP kinase kinase kinase subfamily. The cofactor is Mg(2+). Post-translationally, ubiquitinated by rpm-1. Negatively regulated by ubiquitination by fsn-1 bound rpm-1, followed by degradation.

The protein localises to the synapse. The enzyme catalyses L-seryl-[protein] + ATP = O-phospho-L-seryl-[protein] + ADP + H(+). It carries out the reaction L-threonyl-[protein] + ATP = O-phospho-L-threonyl-[protein] + ADP + H(+). In terms of biological role, component of a MAP kinase pathway that functions presynaptically to regulate synaptic architecture and presynaptic differentiation. Phosphorylates and activates mkk-4. The chain is Mitogen-activated protein kinase kinase kinase dlk-1 from Caenorhabditis briggsae.